The primary structure comprises 108 residues: Hrp pili protein HrpA (108 aa).

A compositionally biased stretch (polar residues) spans Asn41–Ser56. Residues Asn41–Asn73 form a disordered region.

Belongs to the HrpA type 1 family.

It localises to the secreted. It is found in the fimbrium. Functionally, major structural protein of the hrp pilus, which is a component of the type III secretion system (T3SS, Hrp secretion system) required for effector protein delivery, parasitism, and pathogenicity. The hrp pilus functions as a conduit for protein delivery into the host cell. Also, affects the expression of T3SS-associated genes. Required for full expression of genes that encode regulatory, secretion, and effector proteins of the T3SS. HrpA-mediated gene regulation apparently is through effect on the mRNA level of HrpR and HrpS. This chain is Hrp pili protein HrpA (hrpA), found in Pseudomonas syringae pv. syringae.